The primary structure comprises 4563 residues: Apolipoprotein B-100 (4563 aa).

Residues 1-27 form the signal peptide; it reads MDPPRPALLALLALPALLLLLLAGARA. Positions 32 to 126 are heparin-binding; sequence LENVSLVCPK…KNSEEFAAAM (95 aa). Residue Asn34 is glycosylated (N-linked (GlcNAc...) asparagine). Cystine bridges form between Cys39–Cys88 and Cys78–Cys97. Residues 46–672 enclose the Vitellogenin domain; it reads FKHLRKYTYN…PNNYLPKESM (627 aa). A glycan (N-linked (GlcNAc...) asparagine) is linked at Asn185. 4 cysteine pairs are disulfide-bonded: Cys186/Cys212, Cys245/Cys261, Cys385/Cys390, and Cys478/Cys513. The interval 232–306 is heparin-binding; that stretch reads TRPLSTLISS…RFFGEGTKKM (75 aa). The tract at residues 902–959 is heparin-binding; it reads NTNFFHESGLEAHVALKAGKLKFIIPSPKRPVKLLSGGNTLHLVSTTKTEVIPPLIEN. Cys966 and Cys976 are oxidised to a cystine. A glycan (N-linked (GlcNAc...) asparagine) is linked at Asn983. Cys1112 carries the S-palmitoyl cysteine lipid modification. N-linked (GlcNAc...) asparagine glycans are attached at residues Asn1368, Asn1377, and Asn1523. The residue at position 2004 (Lys2004) is an N6-acetyllysine. Positions 2043–2178 are heparin-binding; the sequence is RDAVEKPQEF…EKLSQLQTYM (136 aa). N-linked (GlcNAc...) asparagine glycosylation is found at Asn2239, Asn2560, Asn2779, Asn2982, and Asn3101. Residues 3161-3236 form a heparin-binding region; the sequence is FLKTTKQSFD…KIKFDKYKAE (76 aa). Residues 3174–3184 form a basic (possible receptor binding region) region; the sequence is KAQYKKNKHRH. Cysteines 3194 and 3324 form a disulfide. Residue Asn3224 is glycosylated (N-linked (GlcNAc...) asparagine). Ser3279 carries the phosphoserine modification. Residues Asn3336 and Asn3358 are each glycosylated (N-linked (GlcNAc...) asparagine). The interval 3373 to 3393 is LDL receptor binding; the sequence is VIDALQYKLEGTTRLTRKRGL. Residues 3383–3516 are heparin-binding; sequence GTTRLTRKRG…REYSGTIASE (134 aa). A basic (possible receptor binding region) region spans residues 3386-3394; the sequence is RLTRKRGLK. N-linked (GlcNAc...) asparagine glycans are attached at residues Asn3411, Asn3465, and Asn3895. Residue Ser4048 is modified to Phosphoserine; by FAM20C. A Phosphothreonine modification is found at Thr4052. Asn4237 and Asn4431 each carry an N-linked (GlcNAc...) asparagine glycan.

Interacts with PCSK9. Interacts with MTTP. Interacts with AUP1. Interacts with CIDEB. Post-translationally, palmitoylated; structural requirement for proper assembly of the hydrophobic core of the lipoprotein particle.

The protein localises to the cytoplasm. Its subcellular location is the secreted. The protein resides in the lipid droplet. In terms of biological role, apolipoprotein B is a major protein constituent of chylomicrons (apo B-48), LDL (apo B-100) and VLDL (apo B-100). Apo B-100 functions as a recognition signal for the cellular binding and internalization of LDL particles by the apoB/E receptor. The protein is Apolipoprotein B-100 (APOB) of Homo sapiens (Human).